The sequence spans 477 residues: Bifunctional protein HldE (477 aa).

The segment at 1 to 318 is ribokinase; it reads MKVTLPEFER…ENAVRGRADT (318 aa). Lys179 bears the N6-acetyllysine mark. 195–198 contacts ATP; the sequence is NLSE. Residue Asp264 is part of the active site. The tract at residues 344 to 477 is cytidylyltransferase; it reads MTNGVFDILH…IKKIQQDKKG (134 aa).

In the N-terminal section; belongs to the carbohydrate kinase PfkB family. It in the C-terminal section; belongs to the cytidylyltransferase family. Homodimer.

It carries out the reaction D-glycero-beta-D-manno-heptose 7-phosphate + ATP = D-glycero-beta-D-manno-heptose 1,7-bisphosphate + ADP + H(+). The catalysed reaction is D-glycero-beta-D-manno-heptose 1-phosphate + ATP + H(+) = ADP-D-glycero-beta-D-manno-heptose + diphosphate. Its pathway is nucleotide-sugar biosynthesis; ADP-L-glycero-beta-D-manno-heptose biosynthesis; ADP-L-glycero-beta-D-manno-heptose from D-glycero-beta-D-manno-heptose 7-phosphate: step 1/4. It functions in the pathway nucleotide-sugar biosynthesis; ADP-L-glycero-beta-D-manno-heptose biosynthesis; ADP-L-glycero-beta-D-manno-heptose from D-glycero-beta-D-manno-heptose 7-phosphate: step 3/4. In terms of biological role, catalyzes the phosphorylation of D-glycero-D-manno-heptose 7-phosphate at the C-1 position to selectively form D-glycero-beta-D-manno-heptose-1,7-bisphosphate. Catalyzes the ADP transfer from ATP to D-glycero-beta-D-manno-heptose 1-phosphate, yielding ADP-D-glycero-beta-D-manno-heptose. This chain is Bifunctional protein HldE, found in Shigella flexneri serotype 5b (strain 8401).